Consider the following 258-residue polypeptide: Imidazole glycerol phosphate synthase subunit HisF (258 aa).

Active-site residues include D11 and D130.

The protein belongs to the HisA/HisF family. Heterodimer of HisH and HisF.

The protein localises to the cytoplasm. It carries out the reaction 5-[(5-phospho-1-deoxy-D-ribulos-1-ylimino)methylamino]-1-(5-phospho-beta-D-ribosyl)imidazole-4-carboxamide + L-glutamine = D-erythro-1-(imidazol-4-yl)glycerol 3-phosphate + 5-amino-1-(5-phospho-beta-D-ribosyl)imidazole-4-carboxamide + L-glutamate + H(+). It functions in the pathway amino-acid biosynthesis; L-histidine biosynthesis; L-histidine from 5-phospho-alpha-D-ribose 1-diphosphate: step 5/9. IGPS catalyzes the conversion of PRFAR and glutamine to IGP, AICAR and glutamate. The HisF subunit catalyzes the cyclization activity that produces IGP and AICAR from PRFAR using the ammonia provided by the HisH subunit. The protein is Imidazole glycerol phosphate synthase subunit HisF of Klebsiella pneumoniae (strain 342).